The following is an 831-amino-acid chain: Intraflagellar transport protein 88 (831 aa).

11 TPR repeats span residues 68–101, 120–153, 156–189, 248–281, 492–525, 526–559, 560–593, 595–627, 632–665, 666–699, and 700–733; these read IFKL…EQKV, TCIW…AEGA, AQIR…ASPS, FDPL…SILI, RGVH…DPYD, SFAH…NMES, VQAT…LPSY, DAIY…FSAV, PSIY…VPFS, LAVI…DTTT, and PKWS…FPTN. The interval 785–816 is disordered; the sequence is RRNSVAAVGPGSRAGQDRFEASNNRVSSNTGD. A compositionally biased stretch (polar residues) spans 805–815; that stretch reads ASNNRVSSNTG.

Its subcellular location is the cell projection. The protein localises to the cilium. It localises to the flagellum. The protein resides in the cytoplasm. It is found in the cytoskeleton. Its subcellular location is the flagellum axoneme. The protein localises to the flagellum basal body. In terms of biological role, component of the intraflagellar transport complex B (IFT-B) involved in flagellar assembly. This Giardia intestinalis (strain ATCC 50803 / WB clone C6) (Giardia lamblia) protein is Intraflagellar transport protein 88.